Consider the following 176-residue polypeptide: Putative REP-associated tyrosine transposase (176 aa).

Mg(2+) is bound by residues His-59 and His-61. Tyr-148 functions as the Nucleophile in the catalytic mechanism.

It belongs to the transposase 17 family. RAYT subfamily. As to quaternary structure, homodimer. The cofactor is Mg(2+).

Its function is as follows. Transposase responsible for transposition an insertion sequence (IS) element. Transposition occurs in 2 main steps, excision from the donor DNA 'top strand' into a single strand circle and its subsequent reinsertion into the DNA target. This increases the copy number of the IS. This is Putative REP-associated tyrosine transposase from Haemophilus influenzae (strain ATCC 51907 / DSM 11121 / KW20 / Rd).